A 373-amino-acid chain; its full sequence is Queuine tRNA-ribosyltransferase (373 aa).

Asp-91 acts as the Proton acceptor in catalysis. Residues 91-95, Asp-145, Gln-187, and Gly-214 contribute to the substrate site; that span reads DSGGF. The tract at residues 245 to 251 is RNA binding; sequence GVGKPED. Catalysis depends on Asp-264, which acts as the Nucleophile. Residues 269 to 273 form an RNA binding; important for wobble base 34 recognition region; sequence TRNAR. Zn(2+) contacts are provided by Cys-302, Cys-304, Cys-307, and His-333.

The protein belongs to the queuine tRNA-ribosyltransferase family. As to quaternary structure, homodimer. Within each dimer, one monomer is responsible for RNA recognition and catalysis, while the other monomer binds to the replacement base PreQ1. It depends on Zn(2+) as a cofactor.

It catalyses the reaction 7-aminomethyl-7-carbaguanine + guanosine(34) in tRNA = 7-aminomethyl-7-carbaguanosine(34) in tRNA + guanine. It participates in tRNA modification; tRNA-queuosine biosynthesis. Its function is as follows. Catalyzes the base-exchange of a guanine (G) residue with the queuine precursor 7-aminomethyl-7-deazaguanine (PreQ1) at position 34 (anticodon wobble position) in tRNAs with GU(N) anticodons (tRNA-Asp, -Asn, -His and -Tyr). Catalysis occurs through a double-displacement mechanism. The nucleophile active site attacks the C1' of nucleotide 34 to detach the guanine base from the RNA, forming a covalent enzyme-RNA intermediate. The proton acceptor active site deprotonates the incoming PreQ1, allowing a nucleophilic attack on the C1' of the ribose to form the product. After dissociation, two additional enzymatic reactions on the tRNA convert PreQ1 to queuine (Q), resulting in the hypermodified nucleoside queuosine (7-(((4,5-cis-dihydroxy-2-cyclopenten-1-yl)amino)methyl)-7-deazaguanosine). The polypeptide is Queuine tRNA-ribosyltransferase (Idiomarina loihiensis (strain ATCC BAA-735 / DSM 15497 / L2-TR)).